Here is a 401-residue protein sequence, read N- to C-terminus: Multidrug resistance protein MdtH (401 aa).

Transmembrane regions (helical) follow at residues 13-33 (YFLLLDNLLVVLGFFIVFPLI), 34-54 (SIRFVDQLGWAAVLVGLALGL), 99-116 (PWILWLACALSGLGGTLF), 139-159 (LLMMQDSAGAVIGALIGSWLL), 165-185 (FVCWTGAVIFILAAGWNVWLL), 214-234 (VLTLTGYYMLSVQVMLMLPIV), 243-263 (AAVKWMYAIEAALSLTLLYPI), 277-297 (LMFGLLIMTLSLFPVGLITHL), 299-319 (TLFMFICFFYMGSIIAEPARE), 340-360 (LGLALGGALGYTGGGWMYDTG), and 368-388 (LPWFLLGVIGLITLVGLYWQF).

The protein belongs to the major facilitator superfamily. DHA1 family. MdtH (TC 2.A.1.2.21) subfamily.

It localises to the cell inner membrane. This Yersinia enterocolitica serotype O:8 / biotype 1B (strain NCTC 13174 / 8081) protein is Multidrug resistance protein MdtH.